A 524-amino-acid polypeptide reads, in one-letter code: MASLGTSGQSVTEYVVRVPRNPSKRYSLMAFNAADKVDFSTWNQARMERDLSAKKMYQEEEMPESGAGSEYNRKQREESRRKKYGIILREFKVDDQPWILRVNGKAGRKYKGVKKGGVTENASYFIFTQCADGAFEAFPVSNWYNFTPVAKHRTLTAEEAEQEWERRNKVLNHFTIMQQRRLKDQVGDEDEDEEGGGKLEKGGKGKKKKKKSDLKIHDLEDDLELSSTESENSDEEGESRKKPQKKVPAKGGKKKKRKSDDEALEDSDDGDFEGQEVDYMSDESSSDEELPGKIKPAKEEEGPKGLDEQSESSEESEEEKAEEEEGEEEKKAPTPQDNKKKKKGDSSDESETSEDSDIDGASSSLFMQKKKTPPKKDKKGGSNSSSRGNSRPGTPSPDTGNTSSTLRAAASKLEQSKRGTVSNTPAAKRLKMEAGPQNTSGKSTPQPQSGKSTPSSGDIQLTEEAVRRYLTRKPMTTKDLLKKFQTKKTGLSSEQTVNVLAQILKRLNPDRKVVHDKMHFYLKE.

2 disordered regions span residues 56–76 (MYQE…RKQR) and 181–462 (RLKD…IQLT). Over residues 242-257 (KPQKKVPAKGGKKKKR) the composition is skewed to basic residues. Positions 262-289 (EALEDSDDGDFEGQEVDYMSDESSSDEE) are enriched in acidic residues. Residues 290–307 (LPGKIKPAKEEEGPKGLD) are compositionally biased toward basic and acidic residues. Acidic residues-rich tracts occupy residues 308–327 (EQSE…EEGE) and 347–358 (SDESETSEDSDI). Residues 368–378 (QKKKTPPKKDK) are compositionally biased toward basic residues. Positions 381–397 (GSNSSSRGNSRPGTPSP) are enriched in low complexity. The span at 436–459 (PQNTSGKSTPQPQSGKSTPSSGDI) shows a compositional bias: polar residues.

Belongs to the TFIIF alpha subunit family. As to quaternary structure, heterodimer of an alpha and a beta subunit. Phosphorylated on Ser and other residues by TAF1 and casein kinase II-like kinases.

The protein resides in the nucleus. Functionally, TFIIF is a general transcription initiation factor that binds to RNA polymerase II and helps to recruit it to the initiation complex in collaboration with TFIIB. It promotes transcription elongation. This chain is General transcription factor IIF subunit 1 (gtf2f1), found in Xenopus laevis (African clawed frog).